The chain runs to 134 residues: Fluoride-specific ion channel FluC 3 (134 aa).

The next 4 helical transmembrane spans lie at 4 to 24 (LIILVFVGGAFGAMCREFIML), 35 to 55 (MDIFVANIIAAFLLGLTTSFF), 67 to 87 (MVGTGIMGGLSTFSSFVFGAV), and 100 to 120 (ICYLVASLIVGFIAVELGLMI). Residues G74 and S77 each coordinate Na(+).

It belongs to the fluoride channel Fluc/FEX (TC 1.A.43) family.

Its subcellular location is the cell inner membrane. The catalysed reaction is fluoride(in) = fluoride(out). Na(+) is not transported, but it plays an essential structural role and its presence is essential for fluoride channel function. In terms of biological role, fluoride-specific ion channel. Important for reducing fluoride concentration in the cell, thus reducing its toxicity. The chain is Fluoride-specific ion channel FluC 3 from Yersinia pseudotuberculosis serotype I (strain IP32953).